Consider the following 932-residue polypeptide: 3-hydroxy-3-methylglutaryl-coenzyme A reductase (932 aa).

A run of 6 helical transmembrane segments spans residues 20 to 40, 59 to 79, 92 to 112, 113 to 133, 162 to 182, and 193 to 213; these read VIVC…FTGL, LSSD…YLYL, ILGI…SAVI, HLFG…LLLI, MAIL…VISI, and VFCC…MTFF. An N-linked (GlcNAc...) asparagine glycan is attached at asparagine 279. The helical transmembrane segment at 322 to 342 threads the bilayer; sequence ILTAILATVLASHYIFFSDLA. The segment at 343-467 is linker; the sequence is TYPEKRVSIM…APRPMPELLE (125 aa). Basic and acidic residues predominate over residues 357 to 367; sequence VVNPGSDHEDA. Residues 357 to 442 are disordered; it reads VVNPGSDHED…SGSEDEEEEV (86 aa). Polar residues predominate over residues 374–403; sequence GTLSSSPSTSDVRVIESMTSRTQACQTDPV. Low complexity predominate over residues 406–421; that stretch reads SPRNSRSSSPVSSHSV. The catalytic stretch occupies residues 468 to 932; it reads ILNVGKGPNA…APGTCTANAS (465 aa). Residues glutamate 575, lysine 707, and aspartate 783 each act as charge relay system in the active site. Residue asparagine 850 is glycosylated (N-linked (GlcNAc...) asparagine). Catalysis depends on histidine 882, which acts as the Proton donor. An N-linked (GlcNAc...) asparagine glycan is attached at asparagine 886. Serine 888 is subject to Phosphoserine; by AMPK.

The protein belongs to the HMG-CoA reductase family.

The protein resides in the endoplasmic reticulum membrane. It carries out the reaction (R)-mevalonate + 2 NADP(+) + CoA = (3S)-3-hydroxy-3-methylglutaryl-CoA + 2 NADPH + 2 H(+). It functions in the pathway metabolic intermediate biosynthesis; (R)-mevalonate biosynthesis; (R)-mevalonate from acetyl-CoA: step 3/3. Its function is as follows. This transmembrane glycoprotein is involved in the control of cholesterol biosynthesis. It is the rate-limiting enzyme of sterol biosynthesis. The polypeptide is 3-hydroxy-3-methylglutaryl-coenzyme A reductase (HMGCR) (Strongylocentrotus purpuratus (Purple sea urchin)).